The following is a 256-amino-acid chain: Major prion protein (256 aa).

The first 24 residues, methionine 1–cysteine 24, serve as a signal peptide directing secretion. Residues lysine 25–alanine 233 form an interaction with GRB2, ERI3 and SYN1 region. Positions proline 28–threonine 110 are disordered. A run of 5 repeats spans residues proline 54–glutamine 62, proline 63–glutamine 70, proline 71–glutamine 78, proline 79–glutamine 86, and proline 87–glutamine 95. The segment at proline 54–glutamine 95 is 5 X 8 AA tandem repeats of P-H-G-G-G-W-G-Q. Residues glutamine 55 to glycine 97 show a composition bias toward gly residues. 12 residues coordinate Cu(2+): histidine 64, glycine 65, glycine 66, histidine 72, glycine 73, glycine 74, histidine 80, glycine 81, glycine 82, histidine 88, glycine 90, and glycine 91. Cysteine 182 and cysteine 217 are disulfide-bonded. N-linked (GlcNAc...) asparagine glycosylation is found at asparagine 184 and asparagine 200. The GPI-anchor amidated alanine moiety is linked to residue alanine 233. Positions serine 234–glycine 256 are cleaved as a propeptide — removed in mature form.

This sequence belongs to the prion family. Monomer and homodimer. Has a tendency to aggregate into amyloid fibrils containing a cross-beta spine, formed by a steric zipper of superposed beta-strands. Soluble oligomers may represent an intermediate stage on the path to fibril formation. Copper binding may promote oligomerization. Interacts with GRB2, APP, ERI3/PRNPIP and SYN1. Mislocalized cytosolically exposed PrP interacts with MGRN1; this interaction alters MGRN1 subcellular location and causes lysosomal enlargement. Interacts with KIAA1191.

The protein resides in the cell membrane. It is found in the golgi apparatus. Functionally, its primary physiological function is unclear. Has cytoprotective activity against internal or environmental stresses. May play a role in neuronal development and synaptic plasticity. May be required for neuronal myelin sheath maintenance. May play a role in iron uptake and iron homeostasis. Soluble oligomers are toxic to cultured neuroblastoma cells and induce apoptosis (in vitro). Association with GPC1 (via its heparan sulfate chains) targets PRNP to lipid rafts. Also provides Cu(2+) or Zn(2+) for the ascorbate-mediated GPC1 deaminase degradation of its heparan sulfate side chains. This chain is Major prion protein (PRNP), found in Capra hircus (Goat).